Consider the following 647-residue polypeptide: Exoribonuclease 2 (647 aa).

Positions 190–519 (REDLTSLPFV…NHRLLKAIIK (330 aa)) constitute an RNB domain. An S1 motif domain is found at 564–646 (EQRFSAEVID…ETRSIVARPV (83 aa)).

The protein belongs to the RNR ribonuclease family. RNase II subfamily.

It localises to the cytoplasm. It catalyses the reaction Exonucleolytic cleavage in the 3'- to 5'-direction to yield nucleoside 5'-phosphates.. Functionally, involved in mRNA degradation. Hydrolyzes single-stranded polyribonucleotides processively in the 3' to 5' direction. The sequence is that of Exoribonuclease 2 from Erwinia tasmaniensis (strain DSM 17950 / CFBP 7177 / CIP 109463 / NCPPB 4357 / Et1/99).